The sequence spans 218 residues: Oocyte-specific homeobox protein 7 (218 aa).

Residues 40-72 (SPLVTPGSTMQSSLSVPERNLLQQESEGPSRQS) are compositionally biased toward polar residues. The disordered stretch occupies residues 40 to 77 (SPLVTPGSTMQSSLSVPERNLLQQESEGPSRQSGCMPL). Positions 94 to 153 (FRKERIVYSKEQQRLLQKHFDECQYPKEKKIVELAVLIGVTKMEIKKWFKNNRAKYRQMN) form a DNA-binding region, homeobox.

Belongs to the paired homeobox family. Obox subfamily. In terms of tissue distribution, specifically expressed in oocytes and early embryos.

The protein localises to the nucleus. Its function is as follows. Transcription factor required for zygotic genome activation (ZGA), a critical event in early embryonic development during which the developmental control passes from maternally provided mRNAs to the expression of the zygotic genome after fertilization. Together with other Obox family members, required in early two-cell stage embryos to kick-start the major ZGA wave by facilitating RNA Polymerase II 'pre-configuration', during which RNA Polymerase II relocates from the initial one-cell stage binding targets to ZGA gene promoters and distal enhancers. Mechanistically, promotes recruitment of RNA Polymerase II from (CG-rich) non-ZGA genes to (CG-poor) ZGA genes at the two-cell stage. Binds to regulatory DNA sequences containing a 5'-ACNCCTTTAATCCCAG-3' sequence motif. Most maternal and zygotic Obox family proteins can compensate for one another. The chain is Oocyte-specific homeobox protein 7 from Mus musculus (Mouse).